The chain runs to 207 residues: U1 small nuclear ribonucleoprotein C (207 aa).

A Matrin-type zinc finger spans residues 4 to 36 (YYCDYCDTYLTHDSPSVRKQHNAGYKHKANVRI). Composition is skewed to pro residues over residues 105 to 115 (PPQGYMPPPGV) and 122 to 131 (PGAPLPPPPQ). The segment at 105 to 207 (PPQGYMPPPG…PSAESPESNE (103 aa)) is disordered. Residues 132–144 (NGILRPPGMAPIP) show a composition bias toward low complexity. Residues 162 to 183 (GPPPNYNGLPPPPPYHTNPAAP) show a composition bias toward pro residues. The span at 184 to 207 (PSGNFNNPNLNNPNPSAESPESNE) shows a compositional bias: low complexity.

The protein belongs to the U1 small nuclear ribonucleoprotein C family. In terms of assembly, U1 snRNP is composed of the 7 core Sm proteins B/B', D1, D2, D3, E, F and G that assemble in a heptameric protein ring on the Sm site of the small nuclear RNA to form the core snRNP, and at least 3 U1 snRNP-specific proteins U1-70K, U1-A and U1-C. U1-C interacts with U1 snRNA and the 5' splice-site region of the pre-mRNA.

It is found in the nucleus. Functionally, component of the spliceosomal U1 snRNP, which is essential for recognition of the pre-mRNA 5' splice-site and the subsequent assembly of the spliceosome. U1-C is directly involved in initial 5' splice-site recognition for both constitutive and regulated alternative splicing. The interaction with the 5' splice-site seems to precede base-pairing between the pre-mRNA and the U1 snRNA. Stimulates commitment or early (E) complex formation by stabilizing the base pairing of the 5' end of the U1 snRNA and the 5' splice-site region. This is U1 small nuclear ribonucleoprotein C from Arabidopsis thaliana (Mouse-ear cress).